A 1054-amino-acid polypeptide reads, in one-letter code: Reverse gyrase (1054 aa).

An RG N-terminal-type zinc finger spans residues methionine 1–leucine 43. 4 residues coordinate Zn(2+): cysteine 10, cysteine 13, cysteine 27, and cysteine 35. Cysteine 35 and cysteine 650 are disulfide-bonded. ATP is bound by residues glutamine 61, lysine 84, threonine 85, and serine 86. One can recognise a Helicase ATP-binding domain in the interval alanine 65–glycine 245. A DEAD box motif is present at residues aspartate 182 to aspartate 185. Positions proline 352–arginine 427 are latch region. The topoisomerase I stretch occupies residues aspartate 502–aspartate 1054. One can recognise a Toprim domain in the interval proline 506 to threonine 662. Glutamate 512 is a Mg(2+) binding site. An RG C-terminal-type zinc finger spans residues isoleucine 581 to serine 609. Zn(2+) contacts are provided by cysteine 584, cysteine 587, cysteine 598, and cysteine 601. Aspartate 631 provides a ligand contact to Mg(2+). The Topo IA-type catalytic domain occupies aspartate 677 to aspartate 1054. Residue tyrosine 809 is the O-(5'-phospho-DNA)-tyrosine intermediate of the active site.

The protein in the N-terminal section; belongs to the DEAD box helicase family. DDVD subfamily. It in the C-terminal section; belongs to the type IA topoisomerase family. As to quaternary structure, monomer. The cofactor is Zn(2+). Mg(2+) serves as cofactor.

Its subcellular location is the cytoplasm. The enzyme catalyses ATP + H2O = ADP + phosphate + H(+). In terms of biological role, modifies the topological state of DNA by introducing positive supercoils in an ATP-dependent process, increasing the linking number in steps of +1. Very efficient supercoiling occurs on relaxed DNA with a single-stranded bubble; the minimal bubble is 20 nucleotides (nt) and up to 10 positive supercoils can be introduced into a 3.1 kb plasmid with a 50 nt bubble. Positively supercoils DNA with all (d)NTPS, although it requires about 10-fold more of non-(d)ATP. In the absence of ATP (or at low levels of enzyme), or in the presence of ADP, relaxes negative supercoils. Only relaxes positive supercoils when the substrate contains a bubble. Also promotes strand annealing of complementary ssDNA circles. Binds to single-stranded DNA, transiently cleaves and then rejoins the ends, introducing a positive supercoil in the process. The scissile phosphodiester is attacked by the catalytic tyrosine of the enzyme, resulting in the formation of a DNA-(5'-phosphotyrosyl)-enzyme intermediate. Probably involved in rewinding DNA strands in regions of the chromosome that have opened up to allow replication, transcription, DNA repair and/or for DNA protection. Functionally, in vitro protects DNA against degradation at 90 degrees Celsius, reducing dsDNA breakage about 8-fold; ATP hydrolysis is not necessary, while ADP decreases the protection somewhat. Coats all forms of dsDNA; the DNA is protected against cleavage and transcription. Recognizes nicked DNA and forms a coat at the nicking site, which may help hold DNA in a structure amenable to repair. The sequence is that of Reverse gyrase from Archaeoglobus fulgidus (strain ATCC 49558 / DSM 4304 / JCM 9628 / NBRC 100126 / VC-16).